The chain runs to 433 residues: KICSTOR complex protein ITFG2 (433 aa).

Residues 19-48 (FPHAICLGDVDNDTLNELVVGDTSGKVSVY) form an FG-GAP 1; atypical repeat. Ser-104 bears the Phosphoserine mark. One copy of the FG-GAP 2; atypical repeat lies at 126 to 155 (NTKVMLISDIDGDGCRELVVGYTDRVVRAF). Phosphoserine is present on Ser-220.

In terms of assembly, part of the KICSTOR complex composed of KPTN, ITFG2, KICS2 and SZT2. SZT2 probably serves as a link between the other three proteins in the KICSTOR complex and may mediate the direct interaction with the GATOR complex via GATOR1. The KICSTOR complex interacts directly with the GATOR1 complex and most probably indirectly with the GATOR2 complex in an amino acid-independent manner.

The protein resides in the lysosome membrane. As part of the KICSTOR complex functions in the amino acid-sensing branch of the TORC1 signaling pathway. Recruits, in an amino acid-independent manner, the GATOR1 complex to the lysosomal membranes and allows its interaction with GATOR2 and the RAG GTPases. Functions upstream of the RAG GTPases and is required to negatively regulate mTORC1 signaling in absence of amino acids. In absence of the KICSTOR complex mTORC1 is constitutively localized to the lysosome and activated. The KICSTOR complex is also probably involved in the regulation of mTORC1 by glucose. This is KICSTOR complex protein ITFG2 from Pongo abelii (Sumatran orangutan).